We begin with the raw amino-acid sequence, 78 residues long: Protein SlyX homolog (78 aa).

Belongs to the SlyX family.

This is Protein SlyX homolog from Xanthomonas axonopodis pv. citri (strain 306).